A 443-amino-acid polypeptide reads, in one-letter code: Tol-Pal system protein TolB (443 aa).

A signal peptide spans 1-33; that stretch reads MKIGIINTKIRTVFSAFACMIAASLVCTMPARA.

It belongs to the TolB family. As to quaternary structure, the Tol-Pal system is composed of five core proteins: the inner membrane proteins TolA, TolQ and TolR, the periplasmic protein TolB and the outer membrane protein Pal. They form a network linking the inner and outer membranes and the peptidoglycan layer.

It localises to the periplasm. Part of the Tol-Pal system, which plays a role in outer membrane invagination during cell division and is important for maintaining outer membrane integrity. In Brucella suis biovar 1 (strain 1330), this protein is Tol-Pal system protein TolB.